A 216-amino-acid chain; its full sequence is Regulator of G-protein signaling 19 (216 aa).

Residues 1–19 (MPTPHEAEKQHTGPEEADR) are compositionally biased toward basic and acidic residues. Residues 1 to 30 (MPTPHEAEKQHTGPEEADRPPSMSSHDAAP) form a disordered region. A phosphoserine mark is found at Ser-24 and Ser-97. An RGS domain is found at 90–206 (SFDKLMHSPT…LTSPTYRSLL (117 aa)). Ser-151 carries the phosphoserine; by MAPK1 and MAPK3 modification. Residues 207–216 (LQGAPQSSEA) are interaction with GIPC.

Interacts with GIPC PDZ domain. Interacts with GNAO1. In terms of processing, fatty acylated. Heavily palmitoylated in the cysteine string motif. Post-translationally, phosphorylated, mainly on serine residues.

The protein localises to the membrane. Functionally, inhibits signal transduction by increasing the GTPase activity of G protein alpha subunits thereby driving them into their inactive GDP-bound form. Binds to G-alpha subfamily 1 members, with the order G(i)a3 &gt; G(i)a1 &gt; G(o)a &gt;&gt; G(z)a/G(i)a2. Activity on G(z)-alpha is inhibited by phosphorylation and palmitoylation of the G-protein. The chain is Regulator of G-protein signaling 19 (Rgs19) from Mus musculus (Mouse).